The chain runs to 67 residues: Light-harvesting protein B-870 alpha chain (67 aa).

Met-1 carries the N-formylmethionine; in strain DSM 149 and DSM 151 modification. The Cytoplasmic portion of the chain corresponds to 1 to 12 (MWRIWRLFDPMR). The helical transmembrane segment at 13–33 (AMVAQAVFLLGLAVLIHLMLL) threads the bilayer. His-29 serves as a coordination point for a bacteriochlorophyll. Topologically, residues 34-67 (GTNKYNWLDGAKKAPAATAVAPVPAEVTSLAQAK) are periplasmic.

It belongs to the antenna complex alpha subunit family. As to quaternary structure, an alpha/beta heterodimer. The core complex is formed by different alpha and beta chains, binding bacteriochlorophyll molecules, and arranged most probably in tetrameric structures disposed around the reaction center. The non-pigmented gamma chains may constitute additional components. The N-terminus is blocked.

It is found in the cell inner membrane. Functionally, antenna complexes are light-harvesting systems, which transfer the excitation energy to the reaction centers. This chain is Light-harvesting protein B-870 alpha chain (pufA), found in Rubrivivax gelatinosus (Rhodocyclus gelatinosus).